An 84-amino-acid chain; its full sequence is Small ribosomal subunit protein bS18 (84 aa).

The protein belongs to the bacterial ribosomal protein bS18 family. Part of the 30S ribosomal subunit. Forms a tight heterodimer with protein bS6.

Binds as a heterodimer with protein bS6 to the central domain of the 16S rRNA, where it helps stabilize the platform of the 30S subunit. The polypeptide is Small ribosomal subunit protein bS18 (Maricaulis maris (strain MCS10) (Caulobacter maris)).